A 204-amino-acid polypeptide reads, in one-letter code: Protein GrpE (204 aa).

The tract at residues 1–55 (MSSKNNPESETKAKNKWEKVMEAEEEQEEGRGDGSQEMEPHREGLEFPSREKLEG) is disordered. 2 stretches are compositionally biased toward basic and acidic residues: residues 7–22 (PESETKAKNKWEKVME) and 29–55 (EGRGDGSQEMEPHREGLEFPSREKLEG).

Belongs to the GrpE family. In terms of assembly, homodimer.

It is found in the cytoplasm. In terms of biological role, participates actively in the response to hyperosmotic and heat shock by preventing the aggregation of stress-denatured proteins, in association with DnaK and GrpE. It is the nucleotide exchange factor for DnaK and may function as a thermosensor. Unfolded proteins bind initially to DnaJ; upon interaction with the DnaJ-bound protein, DnaK hydrolyzes its bound ATP, resulting in the formation of a stable complex. GrpE releases ADP from DnaK; ATP binding to DnaK triggers the release of the substrate protein, thus completing the reaction cycle. Several rounds of ATP-dependent interactions between DnaJ, DnaK and GrpE are required for fully efficient folding. The sequence is that of Protein GrpE from Coxiella burnetii (strain RSA 331 / Henzerling II).